The following is a 372-amino-acid chain: MEEKQHYSPGLDGVIAAETHISYLDTQSSQILIRGYDLIELSETKSYLELVHLLLEGRLPEESEMETLERKINSASSLPADHLRLLELLPEDTHPMDGLRTGLSALAGYDRQIDDRSPSANKERAYQLLGKMPALTAASYRIINKKEPILPLQTLSYSANFLYMMTGKLPSSLEEQIFDRSLVLYSEHEMPNSTFAARVIASTHSDLYGALTGAVASLKGNLHGGANEAVMYLLLEAKTTSDFEQLLQTKLKRKEKIMGFGHRVYMKKMDPRALMMKEALQQLCDKAGDHRLYEMCEAGERLMEKEKGLYPNLDYYAAPVYWMLGIPIPLYTPIFFSARTSGLCAHVIEQHANNRLFRPRVSYMGPRYQTKS.

H188 contributes to the substrate binding site. Residue H223 is part of the active site. 256-260 contacts CoA; the sequence is KIMGF. The active site involves H262. Position 272 (R272) interacts with substrate. The active site involves D314. Residues R339 and R358 each contribute to the substrate site.

It belongs to the citrate synthase family.

It carries out the reaction propanoyl-CoA + oxaloacetate + H2O = 2-methylcitrate + CoA + H(+). The catalysed reaction is oxaloacetate + acetyl-CoA + H2O = citrate + CoA + H(+). Its pathway is carbohydrate metabolism; tricarboxylic acid cycle; isocitrate from oxaloacetate: step 1/2. Its function is as follows. Involved in both the tricarboxylic acid (TCA) and methylcitric acid cycles. Has both 2-methylcitrate synthase and citrate synthase activities. Catalyzes the condensation of propionyl-CoA and oxaloacetate to yield 2-methylcitrate (2-MC) and CoA, and the condensation of acetyl-CoA and oxaloacetate to yield citrate and CoA. Has 2.3-fold higher activity as a 2-methylcitrate synthase. Catalyzes the formation of either (2S,3R)- or (2R,3S)-2-methylcitrate. This is Citrate/2-methylcitrate synthase from Bacillus subtilis (strain 168).